The primary structure comprises 274 residues: Triosephosphate isomerase (274 aa).

31–33 serves as a coordination point for substrate; sequence NWK. His118 acts as the Electrophile in catalysis. Residue Glu188 is the Proton acceptor of the active site. Substrate is bound by residues Gly194, Ser234, and 255-256; that span reads GG.

Belongs to the triosephosphate isomerase family. In terms of assembly, homodimer.

The protein localises to the cytoplasm. It catalyses the reaction D-glyceraldehyde 3-phosphate = dihydroxyacetone phosphate. It functions in the pathway carbohydrate biosynthesis; gluconeogenesis. It participates in carbohydrate degradation; glycolysis; D-glyceraldehyde 3-phosphate from glycerone phosphate: step 1/1. In terms of biological role, involved in the gluconeogenesis. Catalyzes stereospecifically the conversion of dihydroxyacetone phosphate (DHAP) to D-glyceraldehyde-3-phosphate (G3P). The polypeptide is Triosephosphate isomerase (Chlamydia trachomatis serovar A (strain ATCC VR-571B / DSM 19440 / HAR-13)).